Here is a 58-residue protein sequence, read N- to C-terminus: Small ribosomal subunit protein bS21 (58 aa).

Residues 36 to 58 (EFYEKPSVKRKRKSEAARKRKKF) form a disordered region. Residues 43–58 (VKRKRKSEAARKRKKF) show a composition bias toward basic residues.

The protein belongs to the bacterial ribosomal protein bS21 family.

The chain is Small ribosomal subunit protein bS21 from Streptococcus uberis (strain ATCC BAA-854 / 0140J).